The sequence spans 666 residues: Adenylylsulfate reductase subunit alpha (666 aa).

Residues 32 to 35, 60 to 61, 67 to 69, Asn-78, Ile-193, Ser-259, Ser-417, 461 to 462, and Ser-472 contribute to the FAD site; these read GGMG, DK, SGA, and AD.

Belongs to the FAD-dependent oxidoreductase 2 family. Heterodimer composed of AprA and AprB. The heterodimers can dimerize to form heterotetramers. The cofactor is FAD.

Its subcellular location is the cytoplasm. The enzyme catalyses sulfite + A + AMP + 2 H(+) = adenosine 5'-phosphosulfate + AH2. Catalytic subunit of the adenylylsulfate reductase which catalyzes reversibly the reduction of adenosine 5'-phosphosulfate (APS) to sulfite and AMP during dissimilatory sulfate reduction. In Megalodesulfovibrio gigas (strain ATCC 19364 / DSM 1382 / NCIMB 9332 / VKM B-1759) (Desulfovibrio gigas), this protein is Adenylylsulfate reductase subunit alpha.